A 727-amino-acid polypeptide reads, in one-letter code: Pentatricopeptide repeat-containing protein At4g20740 (727 aa).

The disordered stretch occupies residues 1–84 (MKSPKPPNLS…PSPPSHSTVI (84 aa)). The segment covering 38 to 56 (SNRQSIPRVSPQPQSNSLA) has biased composition (polar residues). Residues 59–70 (TPFDLRKWDPET) show a composition bias toward basic and acidic residues. PPR repeat units follow at residues 157–191 (DFAA…GRPP), 192–226 (SEKQ…GFKP), 227–261 (RVFL…GLVE), 262–296 (ESTT…LCKP), 297–331 (DVFA…EIKP), 332–366 (DVMA…QILI), 367–401 (DREI…GYIA), 402–436 (DIGI…ELEP), 437–471 (DFET…GYPV), 506–540 (SVSV…GFEP), 541–575 (DSSS…SCVP), 576–606 (SIAA…CLGN), 612–646 (MEFK…GVFI), and 647–681 (NEVI…KVMT).

Belongs to the PPR family. P subfamily.

The protein is Pentatricopeptide repeat-containing protein At4g20740 of Arabidopsis thaliana (Mouse-ear cress).